The chain runs to 453 residues: Verruculogen prenyltransferase (453 aa).

Substrate is bound at residue Glu89. Residues Arg102, Lys194, Tyr196, Lys273, Tyr275, Tyr378, Tyr443, and Tyr447 each contribute to the dimethylallyl diphosphate site.

This sequence belongs to the tryptophan dimethylallyltransferase family.

The enzyme catalyses verruculogen + dimethylallyl diphosphate = fumitremorgin A + diphosphate. It functions in the pathway mycotoxin biosynthesis. Functionally, verruculogen prenyltransferase; part of the gene cluster that mediates the biosynthesis of fumitremorgins, indole alkaloids that carry not only intriguing chemical structures, but also interesting biological and pharmacological activities. The biosynthesis of fumitremorgin-type alkaloids begins by condensation of the two amino acids L-tryptophan and L-proline to brevianamide F, catalyzed by the non-ribosomal peptide synthetase ftmPS/ftmA. Brevianamide F is then prenylated by the prenyltransferase ftmPT1/ftmB in the presence of dimethylallyl diphosphate, resulting in the formation of tryprostatin B. The three cytochrome P450 monooxygenases, ftmP450-1/ftmC, ftmP450-2/ftmE and ftmP450-3/FtmG, are responsible for the conversion of tryprostatin B to 6-hydroxytryprostatin B, tryprostatin A to fumitremorgin C and fumitremorgin C to 12,13-dihydroxyfumitremorgin C, respectively. The putative methyltransferase ftmMT/ftmD is expected for the conversion of 6-hydroxytryprostatin B to tryprostatin A. FtmPT2/FtmH catalyzes the prenylation of 12,13-dihydroxyfumitre-morgin C in the presence of dimethylallyl diphosphate, resulting in the formation of fumitremorgin B. Fumitremorgin B is further converted to verruculogen by ftmOx1/ftmF via the insertion of an endoperoxide bond between the two prenyl moieties. Finally, verruculogen is further converted to fumitremorgin A by the verruculogen prenyltransferase ftmPT3. The sequence is that of Verruculogen prenyltransferase from Neosartorya fischeri (strain ATCC 1020 / DSM 3700 / CBS 544.65 / FGSC A1164 / JCM 1740 / NRRL 181 / WB 181) (Aspergillus fischerianus).